Here is a 256-residue protein sequence, read N- to C-terminus: Thiazole synthase (256 aa).

Lys98 acts as the Schiff-base intermediate with DXP in catalysis. 1-deoxy-D-xylulose 5-phosphate is bound by residues Gly159, 185–186 (AG), and 207–208 (NT).

It belongs to the ThiG family. As to quaternary structure, homotetramer. Forms heterodimers with either ThiH or ThiS.

Its subcellular location is the cytoplasm. It carries out the reaction [ThiS sulfur-carrier protein]-C-terminal-Gly-aminoethanethioate + 2-iminoacetate + 1-deoxy-D-xylulose 5-phosphate = [ThiS sulfur-carrier protein]-C-terminal Gly-Gly + 2-[(2R,5Z)-2-carboxy-4-methylthiazol-5(2H)-ylidene]ethyl phosphate + 2 H2O + H(+). Its pathway is cofactor biosynthesis; thiamine diphosphate biosynthesis. Catalyzes the rearrangement of 1-deoxy-D-xylulose 5-phosphate (DXP) to produce the thiazole phosphate moiety of thiamine. Sulfur is provided by the thiocarboxylate moiety of the carrier protein ThiS. In vitro, sulfur can be provided by H(2)S. This chain is Thiazole synthase, found in Aliivibrio salmonicida (strain LFI1238) (Vibrio salmonicida (strain LFI1238)).